The sequence spans 107 residues: Nucleoid-associated protein A1I_00660 (107 aa).

The segment at Lys81–Phe107 is disordered.

This sequence belongs to the YbaB/EbfC family. As to quaternary structure, homodimer.

Its subcellular location is the cytoplasm. It localises to the nucleoid. Its function is as follows. Binds to DNA and alters its conformation. May be involved in regulation of gene expression, nucleoid organization and DNA protection. The polypeptide is Nucleoid-associated protein A1I_00660 (Rickettsia bellii (strain OSU 85-389)).